The following is a 195-amino-acid chain: MGRARDAILDALENLTAEELKKFKLKLLSVPLREGYGRIPRGALLSMDALDLTDKLVSFYLETYGAELTANVLRDMGLQEMAGQLQAATHQGSGAAPAGIQAPPQSAAKPGLHFIDQHRAALIARVTNVEWLLDALYGKVLTDEQYQAVRAEPTNPSKMRKLFSFTPAWNWTCKDLLLQALRESQSYLVEDLERS.

Residues 1–91 (MGRARDAILD…AGQLQAATHQ (91 aa)) enclose the Pyrin domain. Residues Lys55 and Lys174 each participate in a glycyl lysine isopeptide (Lys-Gly) (interchain with G-Cter in ubiquitin) cross-link. The 89-residue stretch at 107–195 (AAKPGLHFID…SYLVEDLERS (89 aa)) folds into the CARD domain. Phosphoserine is present on Ser195.

Self-associates; enforced oligomerization induces apoptosis, NF-kappa-B regulation and interleukin-1 beta secretion. Homooligomers can form disk-like particles of approximately 12 nm diameter and approximately 1 nm height. Next to isoform 1, also isoform 2 and isoform 3 may be involved in oligomerization leading to functional regulation. Component of several inflammasomes containing one pattern recognition receptor/sensor, such as NLRP1, NLRP2, NLRP3, NLRP6, NLRC4, AIM2, MEFV or NOD2, and probably NLRC4, NLRP12 or IFI16. Major component of the ASC pyroptosome, a 1-2 um supramolecular assembly (one per macrophage cell) which consists of oligomerized PYCARD dimers and CASP1. Interacts with CASP1 (precursor form); the interaction induces activation of CASP1 leading to the processing of interleukin-1 beta; PYCARD competes with RIPK2 for binding to CASP1. Interacts with NLRP3; the interaction requires the homooligomerization of NLRP3. Interacts with NLRP2, NLRC4, MEFV, CARD16, AIM2, IFI16, NOD2, RIGI, RIPK2, PYDC1, PYDC2, NLRP10, CASP8, CHUK, IKBKB and BAX. Component of the AIM2 PANoptosome complex, a multiprotein complex that drives inflammatory cell death (PANoptosis). Post-translationally, phosphorylated. In terms of processing, 'Lys-63'-linked polyubiquitination by TRAF3 is critical for speck formation and inflammasome activation. 'Lys-63'-linked deubiquitinated by USP50; a crucial step for NLRP3-mediated inflammasome activation. 'Lys-63'-linked polyubiquitination by PELI1 is also critical for speck formation and inflammasome activation. Deubiquitinated by USP3 that cleaves 'Lys-48'-linked ubiquitin chains and strengthens its stability by blocking proteasomal degradation. In terms of tissue distribution, widely expressed at low levels. Detected in peripheral blood leukocytes, lung, small intestine, spleen, thymus, colon and at lower levels in placenta, liver and kidney. Very low expression in skeletal muscle, heart and brain. Expressed in lung epithelial cells (at protein level). Detected in the leukemia cell lines HL-60 and U-937, but not in Jurkat T-cell lymphoma and Daudi Burkitt's lymphoma. Detected in the melanoma cell line WM35, but not in WM793. Not detected in HeLa cervical carcinoma cells and MOLT-4 lymphocytic leukemia cells.

It is found in the cytoplasm. The protein resides in the inflammasome. Its subcellular location is the endoplasmic reticulum. It localises to the mitochondrion. The protein localises to the nucleus. It is found in the golgi apparatus membrane. Functionally, functions as a key mediator in apoptosis and inflammation. Promotes caspase-mediated apoptosis involving predominantly caspase-8 and also caspase-9 in a probable cell type-specific manner. Involved in activation of the mitochondrial apoptotic pathway, promotes caspase-8-dependent proteolytic maturation of BID independently of FADD in certain cell types and also mediates mitochondrial translocation of BAX and activates BAX-dependent apoptosis coupled to activation of caspase-9, -2 and -3. Involved in innate immune response by acting as an integral adapter in the assembly of various inflammasomes (NLRP1, NLRP2, NLRP3, NLRP6, AIM2 and probably IFI16) which recruit and activate caspase-1 leading to processing and secretion of pro-inflammatory cytokines. Caspase-1-dependent inflammation leads to macrophage pyroptosis, a form of cell death. The function as activating adapter in different types of inflammasomes is mediated by the pyrin and CARD domains and their homotypic interactions. Clustered PYCARD nucleates the formation of caspase-1 filaments through the interaction of their respective CARD domains, acting as a platform for of caspase-1 polymerization. In the NLRP1 and NLRC4 inflammasomes seems not be required but facilitates the processing of procaspase-1. In cooperation with NOD2 involved in an inflammasome activated by bacterial muramyl dipeptide leading to caspase-1 activation. May be involved in RIGI-triggered pro-inflammatory responses and inflammasome activation. In collaboration with AIM2 which detects cytosolic double-stranded DNA may also be involved in a caspase-1-independent cell death that involves caspase-8. In adaptive immunity may be involved in maturation of dendritic cells to stimulate T-cell immunity and in cytoskeletal rearrangements coupled to chemotaxis and antigen uptake may be involved in post-transcriptional regulation of the guanine nucleotide exchange factor DOCK2; the latter function is proposed to involve the nuclear form. Also involved in transcriptional activation of cytokines and chemokines independent of the inflammasome; this function may involve AP-1, NF-kappa-B, MAPK and caspase-8 signaling pathways. For regulation of NF-kappa-B activating and inhibiting functions have been reported. Modulates NF-kappa-B induction at the level of the IKK complex by inhibiting kinase activity of CHUK and IKBK. Proposed to compete with RIPK2 for association with CASP1 thereby down-regulating CASP1-mediated RIPK2-dependent NF-kappa-B activation and activating interleukin-1 beta processing. Modulates host resistance to DNA virus infection, probably by inducing the cleavage of and inactivating CGAS in presence of cytoplasmic double-stranded DNA. In terms of biological role, may have a regulating effect on the function as inflammasome adapter. Seems to inhibit inflammasome-mediated maturation of interleukin-1 beta. This Homo sapiens (Human) protein is Apoptosis-associated speck-like protein containing a CARD.